A 154-amino-acid chain; its full sequence is 3-dehydroquinate dehydratase (154 aa).

The active-site Proton acceptor is the Tyr-22. Residues Asn-73, His-79, and Asp-86 each coordinate substrate. His-99 acts as the Proton donor in catalysis. Substrate is bound by residues Leu-100 to Ser-101 and Arg-110.

This sequence belongs to the type-II 3-dehydroquinase family. In terms of assembly, homododecamer.

It carries out the reaction 3-dehydroquinate = 3-dehydroshikimate + H2O. The protein operates within metabolic intermediate biosynthesis; chorismate biosynthesis; chorismate from D-erythrose 4-phosphate and phosphoenolpyruvate: step 3/7. In terms of biological role, catalyzes a trans-dehydration via an enolate intermediate. The chain is 3-dehydroquinate dehydratase from Carboxydothermus hydrogenoformans (strain ATCC BAA-161 / DSM 6008 / Z-2901).